The following is a 344-amino-acid chain: Methionine import ATP-binding protein MetN 1 (344 aa).

One can recognise an ABC transporter domain in the interval 2 to 241 (IELRNLSQRF…PHHEVTRALI (240 aa)). 38–45 (GRSGAGKS) contacts ATP.

This sequence belongs to the ABC transporter superfamily. Methionine importer (TC 3.A.1.24) family. In terms of assembly, the complex is composed of two ATP-binding proteins (MetN), two transmembrane proteins (MetI) and a solute-binding protein (MetQ).

Its subcellular location is the cell inner membrane. The catalysed reaction is L-methionine(out) + ATP + H2O = L-methionine(in) + ADP + phosphate + H(+). The enzyme catalyses D-methionine(out) + ATP + H2O = D-methionine(in) + ADP + phosphate + H(+). In terms of biological role, part of the ABC transporter complex MetNIQ involved in methionine import. Responsible for energy coupling to the transport system. The sequence is that of Methionine import ATP-binding protein MetN 1 from Burkholderia orbicola (strain AU 1054).